Here is a 749-residue protein sequence, read N- to C-terminus: Cytosolic phospholipase A2 (749 aa).

The interval 1–178 (MSFIDPYQHI…MKKLLGPKNS (178 aa)) is phospholipid binding. Residue Ser-2 is modified to Phosphoserine. The C2 domain occupies 6-122 (PYQHIIVEHQ…KVGEKKEVPF (117 aa)). Residues Asp-40, Thr-41, Asp-43, Asn-65, Asp-93, Ala-94, and Asn-95 each coordinate Ca(2+). The PLA2c domain occupies 140–740 (SCPDLRFSMA…SNVEARRFFN (601 aa)). Ser-228 functions as the Nucleophile in the catalytic mechanism. A Phosphothreonine modification is found at Thr-268. A disordered region spans residues 409–457 (GSQSRGSTMEEELENITTKHIVSNDSSDSDDESHEPKGTENEDAGSDYQ). Residues Ser-434, Ser-435, and Ser-437 each carry the phosphoserine modification. Ser-505 carries the phosphoserine; by MAPK modification. Ser-515 is modified (phosphoserine). A Glycyl lysine isopeptide (Lys-Gly) (interchain with G-Cter in SUMO2) cross-link involves residue Lys-541. The active-site Proton acceptor is the Asp-549. Lys-606 participates in a covalent cross-link: Glycyl lysine isopeptide (Lys-Gly) (interchain with G-Cter in SUMO2). Residues Ser-727 and Ser-729 each carry the phosphoserine modification.

In terms of assembly, interacts with KAT5. Phosphorylated at both Ser-505 and Ser-727 in response to mitogenic stimuli. Expressed in various cells and tissues such as macrophages, neutrophils, fibroblasts and lung endothelium. Expressed in platelets (at protein level).

It localises to the cytoplasm. Its subcellular location is the golgi apparatus membrane. The protein localises to the nucleus envelope. It carries out the reaction a 1,2-diacyl-sn-glycero-3-phosphocholine + H2O = a 1-acyl-sn-glycero-3-phosphocholine + a fatty acid + H(+). It catalyses the reaction a 1-O-alkyl-2-acyl-sn-glycero-3-phosphocholine + H2O = a 1-O-alkyl-sn-glycero-3-phosphocholine + a fatty acid + H(+). The enzyme catalyses a 1-acyl-sn-glycero-3-phosphocholine + H2O = sn-glycerol 3-phosphocholine + a fatty acid + H(+). The catalysed reaction is 1-hexadecanoyl-2-(5Z,8Z,11Z,14Z-eicosatetraenoyl)-sn-glycero-3-phosphocholine + H2O = 1-hexadecanoyl-sn-glycero-3-phosphocholine + (5Z,8Z,11Z,14Z)-eicosatetraenoate + H(+). It carries out the reaction 1,2-di-(5Z,8Z,11Z,14Z-eicosatetraenoyl)-sn-glycero-3-phosphocholine + H2O = 1-(5Z,8Z,11Z,14Z-eicosatetraenoyl)-sn-glycero-3-phosphocholine + (5Z,8Z,11Z,14Z)-eicosatetraenoate + H(+). It catalyses the reaction 1-octadecanoyl-2-(5Z,8Z,11Z,14Z-eicosatetraenoyl)-sn-glycero-3-phosphocholine + H2O = 1-octadecanoyl-sn-glycero-3-phosphocholine + (5Z,8Z,11Z,14Z)-eicosatetraenoate + H(+). The enzyme catalyses 1-hexadecanoyl-2-(9Z,12Z-octadecadienoyl)-sn-glycero-3-phosphocholine + H2O = (9Z,12Z)-octadecadienoate + 1-hexadecanoyl-sn-glycero-3-phosphocholine + H(+). The catalysed reaction is 1-octadecanoyl-2-(9Z,12Z,15Z-octadecatrienoyl)-sn-glycero-3-phosphocholine + H2O = (9Z,12Z,15Z)-octadecatrienoate + 1-octadecanoyl-sn-glycero-3-phosphocholine + H(+). It carries out the reaction 1-(5Z,8Z,11Z,14Z-eicosatetraenoyl)-2-hexadecanoyl-sn-glycero-3-phosphocholine + H2O = 1-(5Z,8Z,11Z,14Z-eicosatetraenoyl)-sn-glycero-3-phosphocholine + hexadecanoate + H(+). It catalyses the reaction 1-O-hexadecyl-2-(5Z,8Z,11Z,14Z)-eicosatetraenoyl-sn-glycero-3-phosphocholine + H2O = 1-O-hexadecyl-sn-glycero-3-phosphocholine + (5Z,8Z,11Z,14Z)-eicosatetraenoate + H(+). The enzyme catalyses 1,2-di-(9Z-octadecenoyl)-sn-glycero-3-phospho-(1'-sn-glycerol) + H2O = 1-(9Z-octadecenoyl)-sn-glycero-3-phospho-(1'-sn-glycerol) + (9Z)-octadecenoate + H(+). The catalysed reaction is 1-octadecanoyl-2-(5Z,8Z,11Z,14Z-eicosatetraenoyl)-sn-glycero-3-phosphate + H2O = 1-octadecanoyl-sn-glycero-3-phosphate + (5Z,8Z,11Z,14Z)-eicosatetraenoate + H(+). It carries out the reaction 1-hexadecanoyl-sn-glycero-3-phosphocholine + H2O = sn-glycerol 3-phosphocholine + hexadecanoate + H(+). It catalyses the reaction 2-(prostaglandin E2)-sn-glycero-3-phosphoethanolamine + H2O = sn-glycero-3-phosphoethanolamine + prostaglandin E2 + H(+). The enzyme catalyses 2-[(15S)-hydroxy-(5Z,8Z,11Z,13E)-eicosatetraenoyl]-sn-glycero-3-phosphocholine + H2O = (15S)-hydroxy-(5Z,8Z,11Z,13E)-eicosatetraenoate + sn-glycerol 3-phosphocholine + H(+). The catalysed reaction is 2-[(15R)-hydroxy-(5Z,8Z,11Z,13E)-eicosatetraenoyl]-sn-glycero-3-phosphocholine + H2O = (15R)-hydroxy-(5Z,8Z,11Z,13E)-eicosatetraenoate + sn-glycerol 3-phosphocholine + H(+). It carries out the reaction 2-(prostaglandin E2)-sn-glycero-3-phosphocholine + H2O = prostaglandin E2 + sn-glycerol 3-phosphocholine + H(+). It catalyses the reaction 2-[(11R)-hydroxy-(5Z,8Z,12E,14Z)-eicosatetraenoyl]-sn-glycero-3-phosphocholine + H2O = (11R)-hydroxy-(5Z,8Z,12E,14Z)-eicosatetraenoate + sn-glycerol 3-phosphocholine + H(+). The enzyme catalyses 1-(5Z,8Z,11Z,14Z-eicosatetraenoyl)-2-O-hexadecyl-sn-glycero-3-phosphocholine + H2O = 2-O-hexadecyl-sn-glycero-3-phosphocholine + (5Z,8Z,11Z,14Z)-eicosatetraenoate + H(+). The catalysed reaction is 1-octadecanoyl-2-(5Z,8Z,11Z,14Z-eicosatetraenoyl)-sn-glycero-3-phosphocholine + glycerol = 1-(5Z,8Z,11Z,14Z-eicosatetraenoyl)-glycerol + 1-octadecanoyl-sn-glycero-3-phosphocholine. It carries out the reaction 1-octadecanoyl-2-(9Z,12Z,15Z-octadecatrienoyl)-sn-glycero-3-phosphocholine + glycerol = 1-(9Z,12Z,15Z-octadecatrienoyl)-glycerol + 1-octadecanoyl-sn-glycero-3-phosphocholine. It functions in the pathway membrane lipid metabolism; glycerophospholipid metabolism. It participates in lipid metabolism; arachidonate metabolism. The protein operates within lipid metabolism; prostaglandin biosynthesis. Its pathway is lipid metabolism; leukotriene B4 biosynthesis. Its activity is regulated as follows. Activated by cytosolic calcium, which is necessary for binding to membrane lipids. Activated by phosphorylation in response to mitogenic stimuli. Activated by ceramide-1-phosphate. Binding (via C2 domain) to ceramide-1-phosphate increases the affinity for membrane lipids. Can be activated by phosphoinositides in the absence of calcium. Inhibited by ANXA5 in a calcium- and substrate-dependent way. Has primarily calcium-dependent phospholipase and lysophospholipase activities, with a major role in membrane lipid remodeling and biosynthesis of lipid mediators of the inflammatory response. Plays an important role in embryo implantation and parturition through its ability to trigger prostanoid production. Preferentially hydrolyzes the ester bond of the fatty acyl group attached at sn-2 position of phospholipids (phospholipase A2 activity). Selectively hydrolyzes sn-2 arachidonoyl group from membrane phospholipids, providing the precursor for eicosanoid biosynthesis via the cyclooxygenase pathway. In an alternative pathway of eicosanoid biosynthesis, hydrolyzes sn-2 fatty acyl chain of eicosanoid lysophopholipids to release free bioactive eicosanoids. Hydrolyzes the ester bond of the fatty acyl group attached at sn-1 position of phospholipids (phospholipase A1 activity) only if an ether linkage rather than an ester linkage is present at the sn-2 position. This hydrolysis is not stereospecific. Has calcium-independent phospholipase A2 and lysophospholipase activities in the presence of phosphoinositides. Has O-acyltransferase activity. Catalyzes the transfer of fatty acyl chains from phospholipids to a primary hydroxyl group of glycerol (sn-1 or sn-3), potentially contributing to monoacylglycerol synthesis. This Homo sapiens (Human) protein is Cytosolic phospholipase A2 (PLA2G4A).